We begin with the raw amino-acid sequence, 416 residues long: Formyl-CoA:oxalate CoA-transferase (416 aa).

Residues 17–18 (QS), R38, 72–75 (LNTK), 96–98 (NFH), H104, and 137–140 (KAYE) contribute to the CoA site. The active-site Nucleophile is D169. Substrate is bound at residue 248–250 (GGQ). 273-275 (QEQ) contributes to the CoA binding site.

Belongs to the CoA-transferase III family. Frc subfamily. Homodimer.

The catalysed reaction is formyl-CoA + oxalate = oxalyl-CoA + formate. The protein operates within metabolic intermediate degradation; oxalate degradation; CO(2) and formate from oxalate: step 1/2. Its function is as follows. Involved in the catabolism of oxalate and in the adapatation to low pH via the induction of the oxalate-dependent acid tolerance response (ATR). Catalyzes the transfer of the CoA moiety from formyl-CoA to oxalate. This Escherichia coli O81 (strain ED1a) protein is Formyl-CoA:oxalate CoA-transferase.